Here is an 869-residue protein sequence, read N- to C-terminus: Phosphatidylethanolamine N-methyltransferase (869 aa).

At serine 2 the chain carries N-acetylserine. Residues 2–55 (SSCKTTLSEMVGSVTKDRGTINVEARTRSSNVTFKPPVTHDMVRSLFDPTLKKS) lie on the Lumenal side of the membrane. Residues 56–76 (LLEKCIALAIISNFFICYWVF) form a helical membrane-spanning segment. Residues 77–86 (QRFGLQFTKY) lie on the Cytoplasmic side of the membrane. The chain crosses the membrane as a helical span at residues 87 to 107 (FFLVQYLFWRIAYNLGIGLVL). Residues 108-187 (HYQSHYETLT…EINVWLIFRQ (80 aa)) lie on the Lumenal side of the membrane. Residues 188–208 (FVDLILMQDFVTYIIYVYLSI) form a helical membrane-spanning segment. The Cytoplasmic segment spans residues 209 to 212 (PYSW). The chain crosses the membrane as a helical span at residues 213-233 (VQIFNWRSLLGVILILFNIWV). The Lumenal portion of the chain corresponds to 234 to 258 (KLDAHRVVKDYAWYWGDFFFLEESE). The chain crosses the membrane as a helical span at residues 259–279 (LIFDGVFNISPHPMYSIGYLG). Residues 280 to 291 (YYGLSLICNDYK) lie on the Cytoplasmic side of the membrane. Residues 292-310 (VLLVSVFGHYSQFLFLKYV) traverse the membrane as a helical segment. Residues 311–362 (ENPHIERTYGDGTDSDSQMNSRIDDLISKENYDYSRPLINMGLSFNNFNKLR) are Lumenal-facing. The chain crosses the membrane as a helical span at residues 363–383 (FTDYFTIGTVAALMLGTIMNA). The Cytoplasmic segment spans residues 384–389 (RFINLN). A helical transmembrane segment spans residues 390–410 (YLFITVFVTKLVSWLFISTIL). The Lumenal segment spans residues 411 to 439 (YKQSQSKWFTRLFLENGYTQVYSYEQWQF). The helical transmembrane segment at 440–460 (IYNYYLVLTYTLMIIHTGLQI) threads the bilayer. Residues 461 to 463 (WSN) are Cytoplasmic-facing. The chain crosses the membrane as a helical span at residues 464-484 (FSNINNSQLIFGLILVALQTW). Residues 485–534 (CDKETRLAISDFGWFYGDFFLSNYISTRKLTSQGIYRYLNHPEAVLGVVG) lie on the Lumenal side of the membrane. Residues 535–555 (VWGTVLMTNFAVTNIILAVLW) traverse the membrane as a helical segment. Over 556–869 (TLTNFILVKF…DIKQTLDSLA (314 aa)) the chain is Cytoplasmic.

It belongs to the class VI-like SAM-binding methyltransferase superfamily. CHO2 family.

Its subcellular location is the endoplasmic reticulum membrane. The catalysed reaction is a 1,2-diacyl-sn-glycero-3-phosphoethanolamine + S-adenosyl-L-methionine = a 1,2-diacyl-sn-glycero-3-phospho-N-methylethanolamine + S-adenosyl-L-homocysteine + H(+). It functions in the pathway phospholipid metabolism; phosphatidylcholine biosynthesis. Functionally, catalyzes the first step of the methylation pathway of phosphatidylcholine biosynthesis, the SAM-dependent methylation of phosphatidylethanolamine (PE) to phosphatidylmonomethylethanolamine (PMME). Preferentially converts di-C16:1 substrates. The protein is Phosphatidylethanolamine N-methyltransferase of Saccharomyces cerevisiae (strain ATCC 204508 / S288c) (Baker's yeast).